The primary structure comprises 265 residues: Small ribosomal subunit protein uS3 (265 aa).

In terms of domain architecture, KH type-2 spans 43–111; it reads IRTMLKTSLD…QIQLNILEVK (69 aa). A disordered region spans residues 217–265; that stretch reads AREQANQKSSRPERRNDRSDGRTGDRRTNAPRTAPAAEAAPVAAAGVEA. Over residues 226–244 the composition is skewed to basic and acidic residues; sequence SRPERRNDRSDGRTGDRRT. Residues 250–265 show a composition bias toward low complexity; it reads APAAEAAPVAAAGVEA.

It belongs to the universal ribosomal protein uS3 family. Part of the 30S ribosomal subunit. Forms a tight complex with proteins S10 and S14.

In terms of biological role, binds the lower part of the 30S subunit head. Binds mRNA in the 70S ribosome, positioning it for translation. This is Small ribosomal subunit protein uS3 from Clavibacter michiganensis subsp. michiganensis (strain NCPPB 382).